The sequence spans 375 residues: DNA replication and repair protein RecF (375 aa).

30-37 is a binding site for ATP; sequence GNNGSGKS.

The protein belongs to the RecF family.

The protein resides in the cytoplasm. The RecF protein is involved in DNA metabolism; it is required for DNA replication and normal SOS inducibility. RecF binds preferentially to single-stranded, linear DNA. It also seems to bind ATP. This chain is DNA replication and repair protein RecF, found in Hahella chejuensis (strain KCTC 2396).